Reading from the N-terminus, the 232-residue chain is Pseudaminic acid cytidylyltransferase (232 aa).

It belongs to the CMP-NeuNAc synthase family. Mg(2+) is required as a cofactor.

It catalyses the reaction pseudaminate + CTP = CMP-pseudaminate + diphosphate. Functionally, catalyzes the final step in the biosynthesis of pseudaminic acid, a sialic-acid-like sugar that is used to modify flagellin. Mediates the activation of pseudaminic acid with CMP by forming CMP-pseudaminic acid. In Campylobacter jejuni subsp. jejuni serotype O:2 (strain ATCC 700819 / NCTC 11168), this protein is Pseudaminic acid cytidylyltransferase (pseF).